The chain runs to 1131 residues: Homeobox-DDT domain protein RLT3 (1131 aa).

The segment at residues 2–56 (KRKSPLQVQALEGFYLEQMYPTPKEMEDLGKSLGLTLKEVRGWFKRRRSRGKGVK) is a DNA-binding region (homeobox; TALE-type). Over residues 239-251 (LQKRSTEKKRRSI) the composition is skewed to basic residues. Residues 239 to 264 (LQKRSTEKKRRSIHREAELNKDETQR) form a disordered region. Residues 252-264 (HREAELNKDETQR) are compositionally biased toward basic and acidic residues. In terms of domain architecture, DDT spans 365 to 424 (PESVKKLFKVVHFLYTYSVTLDIGPFTLDEFTRAFHDKDSLLLGKIHLSLLKLLLLDVET). Residues 579–609 (EDPDKSQSDSDDSGSVDDESDDCSISSGDEI) form a disordered region. Residues 587–600 (DSDDSGSVDDESDD) are compositionally biased toward acidic residues.

The protein resides in the nucleus. Functionally, transcriptional regulator required for the maintenance of the plant vegetative phase. May prevent the early activation of the vegetative-to-reproductive transition by regulating key genes that contribute to flower timing. The protein is Homeobox-DDT domain protein RLT3 of Arabidopsis thaliana (Mouse-ear cress).